The sequence spans 221 residues: UPF0502 protein PSPTO_2686 (221 aa).

The protein belongs to the UPF0502 family.

This chain is UPF0502 protein PSPTO_2686, found in Pseudomonas syringae pv. tomato (strain ATCC BAA-871 / DC3000).